The following is a 232-amino-acid chain: Ribosomal RNA small subunit methyltransferase G (232 aa).

Residues G93, L98, 144-145, and R163 contribute to the S-adenosyl-L-methionine site; that span reads VE.

The protein belongs to the methyltransferase superfamily. RNA methyltransferase RsmG family.

It localises to the cytoplasm. It carries out the reaction guanosine(527) in 16S rRNA + S-adenosyl-L-methionine = N(7)-methylguanosine(527) in 16S rRNA + S-adenosyl-L-homocysteine. In terms of biological role, specifically methylates the N7 position of guanine in position 527 of 16S rRNA. In Burkholderia pseudomallei (strain 1710b), this protein is Ribosomal RNA small subunit methyltransferase G.